A 157-amino-acid chain; its full sequence is DNA gyrase inhibitor (157 aa).

The protein belongs to the DNA gyrase inhibitor family. In terms of assembly, interacts with DNA gyrase.

It is found in the cytoplasm. Its function is as follows. Inhibits the supercoiling activity of DNA gyrase. Acts by inhibiting DNA gyrase at an early step, prior to (or at the step of) binding of DNA by the gyrase. It protects cells against toxins that target DNA gyrase, by inhibiting activity of these toxins and reducing the formation of lethal double-strand breaks in the cell. The protein is DNA gyrase inhibitor of Cronobacter turicensis (strain DSM 18703 / CCUG 55852 / LMG 23827 / z3032).